Here is a 426-residue protein sequence, read N- to C-terminus: 3-phosphoshikimate 1-carboxyvinyltransferase (426 aa).

Positions 22, 23, and 27 each coordinate 3-phosphoshikimate. A phosphoenolpyruvate-binding site is contributed by lysine 22. The phosphoenolpyruvate site is built by glycine 96 and arginine 124. Serine 170 and serine 171 together coordinate 3-phosphoshikimate. Phosphoenolpyruvate is bound at residue glutamine 172. Residues serine 198, aspartate 314, asparagine 337, and lysine 341 each contribute to the 3-phosphoshikimate site. The active-site Proton acceptor is the aspartate 314. Residues arginine 345, arginine 387, and lysine 412 each coordinate phosphoenolpyruvate.

The protein belongs to the EPSP synthase family. As to quaternary structure, homotetramer.

Its subcellular location is the cytoplasm. The enzyme catalyses 3-phosphoshikimate + phosphoenolpyruvate = 5-O-(1-carboxyvinyl)-3-phosphoshikimate + phosphate. It participates in metabolic intermediate biosynthesis; chorismate biosynthesis; chorismate from D-erythrose 4-phosphate and phosphoenolpyruvate: step 6/7. Catalyzes the transfer of the enolpyruvyl moiety of phosphoenolpyruvate (PEP) to the 5-hydroxyl of shikimate-3-phosphate (S3P) to produce enolpyruvyl shikimate-3-phosphate and inorganic phosphate. This chain is 3-phosphoshikimate 1-carboxyvinyltransferase, found in Vibrio cholerae serotype O1 (strain ATCC 39315 / El Tor Inaba N16961).